The primary structure comprises 172 residues: Large ribosomal subunit protein uL10 (172 aa).

This sequence belongs to the universal ribosomal protein uL10 family. In terms of assembly, part of the ribosomal stalk of the 50S ribosomal subunit. The N-terminus interacts with L11 and the large rRNA to form the base of the stalk. The C-terminus forms an elongated spine to which L12 dimers bind in a sequential fashion forming a multimeric L10(L12)X complex.

In terms of biological role, forms part of the ribosomal stalk, playing a central role in the interaction of the ribosome with GTP-bound translation factors. This Acidothermus cellulolyticus (strain ATCC 43068 / DSM 8971 / 11B) protein is Large ribosomal subunit protein uL10.